Here is a 149-residue protein sequence, read N- to C-terminus: Transcriptional repressor NrdR (149 aa).

A zinc finger spans residues 3–34 (CPFCGHAATQVIDTRMSEEGDTVRRRRRCESC). Residues 49–139 (PAVVKKNGSR…VYRSFEDVSE (91 aa)) enclose the ATP-cone domain.

Belongs to the NrdR family. Zn(2+) is required as a cofactor.

Its function is as follows. Negatively regulates transcription of bacterial ribonucleotide reductase nrd genes and operons by binding to NrdR-boxes. The protein is Transcriptional repressor NrdR of Ralstonia nicotianae (strain ATCC BAA-1114 / GMI1000) (Ralstonia solanacearum).